We begin with the raw amino-acid sequence, 355 residues long: F-box only protein 32 (355 aa).

Positions 62–67 match the Nuclear localization signal motif; it reads KKRKKD. The Nuclear export signal signature appears at 169–173; sequence LLQTL. Residues 223–271 form the F-box domain; the sequence is LTFTDLPLCLQLNIMQRLSDGRDLVSLGQVAPDLHVLSEDRLLWKKLCQ. Residues 280–295 carry the Bipartite nuclear localization signal motif; it reads RKRLILSDKGQLDWKK.

In terms of assembly, part of the SCF (SKP1-CUL1-F-box) E3 ubiquitin-protein ligase complex SCF(FBXO32) formed of CUL1, SKP1, RBX1 and FBXO32.

Its subcellular location is the cytoplasm. The protein resides in the nucleus. It functions in the pathway protein modification; protein ubiquitination. Substrate recognition component of a SCF (SKP1-CUL1-F-box protein) E3 ubiquitin-protein ligase complex which mediates the ubiquitination and subsequent proteasomal degradation of target proteins. Probably recognizes and binds to phosphorylated target proteins during skeletal muscle atrophy. Recognizes TERF1. This is F-box only protein 32 (FBXO32) from Bos taurus (Bovine).